A 364-amino-acid polypeptide reads, in one-letter code: Nicotinate-nucleotide--dimethylbenzimidazole phosphoribosyltransferase (364 aa).

Glu332 serves as the catalytic Proton acceptor.

Belongs to the CobT family.

The enzyme catalyses 5,6-dimethylbenzimidazole + nicotinate beta-D-ribonucleotide = alpha-ribazole 5'-phosphate + nicotinate + H(+). The protein operates within nucleoside biosynthesis; alpha-ribazole biosynthesis; alpha-ribazole from 5,6-dimethylbenzimidazole: step 1/2. In terms of biological role, catalyzes the synthesis of alpha-ribazole-5'-phosphate from nicotinate mononucleotide (NAMN) and 5,6-dimethylbenzimidazole (DMB). The chain is Nicotinate-nucleotide--dimethylbenzimidazole phosphoribosyltransferase from Salinispora tropica (strain ATCC BAA-916 / DSM 44818 / JCM 13857 / NBRC 105044 / CNB-440).